Consider the following 207-residue polypeptide: Ras-related protein Rab-8A (207 aa).

10 residues coordinate GTP: Ser-17, Gly-18, Val-19, Gly-20, Lys-21, Thr-22, Cys-23, Ser-35, Ser-39, and Thr-40. Thr-22 is a binding site for Mg(2+). 2 consecutive short sequence motifs (switch) follow at residues 31–45 and 63–80; these read DAFNSTFISTIGIDF and DTAGQERFRTITTAYYRG. Residues Thr-40 and Asp-63 each contribute to the Mg(2+) site. Residue Gly-66 coordinates GTP. Residue Thr-72 is modified to Phosphothreonine. Asn-121, Lys-122, Asp-124, Ala-152, and Lys-153 together coordinate GTP. Ser-181 and Ser-185 each carry phosphoserine. A Cysteine methyl ester modification is found at Cys-204. Cys-204 is lipidated: S-geranylgeranyl cysteine. Residues 205–207 constitute a propeptide, removed in mature form; sequence VLL.

It belongs to the small GTPase superfamily. Rab family. As to quaternary structure, interacts (GTP-bound form) with MICALL1; regulates RAB8A association with recycling endosomes. Interacts with MICALL2; competes with RAB13 and is involved in E-cadherin endocytic recycling. Interacts (GTP-bound form) with MICAL1, MICALCL, MICAL3, EHBP1 and EHBP1L1; at least in case of MICAL1, MICALCL, MICAL3 and EHBP1L1 two molecules of RAB8A can bind to one molecule of the effector protein; ternary complexes of RAB8A, RAB13 and either MICAL1 or EHBP1L1 are possible. Interacts with EHD1. Interacts with MAP4K2 and SYTL4. Interacts with SGSM1 and SGSM3. Interacts with RABIF, RIMS2, RPH3A and RPH3A. Interacts with OPTN. Interacts with RAB3IP, RAB3IP functions as guanine exchange factor (GEF). Interacts with MYO5B. Interacts with CIMAP3. Interacts with BIRC6/bruce. Interacts with OCRL. Interacts with AHI1. Interacts with DCDC1. Interacts with LRRK2; interaction facilitates phosphorylation of Thr-72. Interacts with RAB31P, GDI1, GDI2, CHM, CHML, RABGGTA, RABGGTB, TBC1D15 and INPP5B; these interactions are dependent on Thr-72 not being phosphorylated. Interacts with RILPL1 and RILPL2; these interactions are dependent on the phosphorylation of Thr-72 by LRRK2. Interacts with DZIP1; prevents inhibition by the GDP-dissociation inhibitor GDI2. Interacts (in GDP-bound form) with RAB3IP/Rabin8, RAB3IP functions as guanine exchange factor (GEF) towards RAB8A. Interacts (in GDP-bound form) with RPGR, RPGR functions as GEF towards RAB8A. Mg(2+) is required as a cofactor. Post-translationally, phosphorylation of Thr-72 in the switch II region by LRRK2 prevents the association of RAB regulatory proteins, including CHM, CHML and RAB GDP dissociation inhibitors GDI1 and GDI2. Phosphorylation by LRRK2 is required for localization to stressed lysosomes.

It localises to the cell membrane. The protein localises to the golgi apparatus. Its subcellular location is the endosome membrane. It is found in the recycling endosome membrane. The protein resides in the cell projection. It localises to the cilium. The protein localises to the cytoplasmic vesicle. Its subcellular location is the phagosome membrane. It is found in the cytoplasm. The protein resides in the cytoskeleton. It localises to the microtubule organizing center. The protein localises to the centrosome. Its subcellular location is the centriole. It is found in the cilium basal body. The protein resides in the midbody. It localises to the lysosome. It carries out the reaction GTP + H2O = GDP + phosphate + H(+). Regulated by guanine nucleotide exchange factors (GEFs) such as RAB3IP/Rabin8 and RPGR which promote the exchange of bound GDP for free GTP, GTPase activating proteins (GAPs) which increase the GTP hydrolysis activity, and GDP dissociation inhibitors (GDIs) which inhibit the dissociation of the nucleotide from the GTPase. Activated in response to insulin. Its function is as follows. The small GTPases Rab are key regulators of intracellular membrane trafficking, from the formation of transport vesicles to their fusion with membranes. Rabs cycle between an inactive GDP-bound form and an active GTP-bound form that is able to recruit to membranes different sets of downstream effectors directly responsible for vesicle formation, movement, tethering and fusion. RAB8A is involved in polarized vesicular trafficking and neurotransmitter release. Together with RAB11A, RAB3IP, the exocyst complex, PARD3, PRKCI, ANXA2, CDC42 and DNMBP promotes transcytosis of PODXL to the apical membrane initiation sites (AMIS), apical surface formation and lumenogenesis. Regulates the compacted morphology of the Golgi. Together with MYO5B and RAB11A participates in epithelial cell polarization. Also involved in membrane trafficking to the cilium and ciliogenesis. Together with MICALL2, may also regulate adherens junction assembly. May play a role in insulin-induced transport to the plasma membrane of the glucose transporter GLUT4 and therefore play a role in glucose homeostasis. Involved in autophagy. Participates in the export of a subset of neosynthesized proteins through a Rab8-Rab10-Rab11-dependent endososomal export route. Targeted to and stabilized on stressed lysosomes through LRRK2 phosphorylation. Suppresses stress-induced lysosomal enlargement through EHBP1 and EHNP1L1 effector proteins. The protein is Ras-related protein Rab-8A (RAB8A) of Canis lupus familiaris (Dog).